We begin with the raw amino-acid sequence, 527 residues long: GMP synthase [glutamine-hydrolyzing] (527 aa).

The 190-residue stretch at 13-202 folds into the Glutamine amidotransferase type-1 domain; sequence TILVLDFGSQ…AVDICGAAQK (190 aa). Catalysis depends on cysteine 89, which acts as the Nucleophile. Catalysis depends on residues histidine 176 and glutamate 178. In terms of domain architecture, GMPS ATP-PPase spans 203 to 402; the sequence is WSMENFVDTE…MGIPHDLVWR (200 aa). 231–237 serves as a coordination point for ATP; the sequence is SGGVDST. The XMP site is built by arginine 304, aspartate 464, lysine 519, and glutamate 525.

In terms of assembly, homodimer. It depends on Mg(2+) as a cofactor.

It is found in the cytoplasm. Its subcellular location is the cytosol. The enzyme catalyses XMP + L-glutamine + ATP + H2O = GMP + L-glutamate + AMP + diphosphate + 2 H(+). It participates in purine metabolism; GMP biosynthesis; GMP from XMP (L-Gln route): step 1/1. Functionally, catalyzes the conversion of xanthine monophosphate (XMP) to GMP in the presence of glutamine and ATP through an adenyl-XMP intermediate. This Yarrowia lipolytica (strain CLIB 122 / E 150) (Yeast) protein is GMP synthase [glutamine-hydrolyzing] (GUA1).